We begin with the raw amino-acid sequence, 689 residues long: SH3 domain-binding protein 1 (689 aa).

Basic residues predominate over residues 1 to 11 (MMKRQLHRMRQ). Positions 1-24 (MMKRQLHRMRQLAHTGSSGRTPET) are disordered. Positions 1–275 (MMKRQLHRMR…TAAPFSRVYG (275 aa)) are interaction with CGNL1. In terms of domain architecture, BAR spans 17 to 262 (SSGRTPETAE…RDNHSQADSS (246 aa)). A phosphoserine mark is found at Ser-241 and Ser-262. Residues 276 to 469 (VSLRTHLQDL…VLIQNADTLF (194 aa)) enclose the Rho-GAP domain. The tract at residues 470–689 (PGDINFSVSG…RPRGLISETD (220 aa)) is interaction with CD2AP. The tract at residues 507 to 689 (TAATPTPTPA…RPRGLISETD (183 aa)) is disordered. Ser-539 and Ser-545 each carry phosphoserine. A compositionally biased stretch (pro residues) spans 565–575 (PARPTMPPPQP). A compositionally biased stretch (low complexity) spans 576 to 594 (SSSRSSPPALSLPAGSVSP). At Ser-586 the chain carries Phosphoserine. Thr-596 bears the Phosphothreonine mark. The SH3-binding motif lies at 611-620 (APTVPPPLPP). Pro residues predominate over residues 613-625 (TVPPPLPPAPPQP). Ser-641 bears the Phosphoserine mark. Over residues 670 to 680 (PPTPVLPPQPR) the composition is skewed to pro residues.

Interacts with RAC1. Interacts with the exocyst via EXOC4 and EXOC8; required for the localization of both SH3BP1 and the exocyst to the leading edge of migrating cells. Interacts with CD2AP and CGNL1; probably part of a complex at cell junctions. Interacts with CAPZA1; recruits CAPZA1 to forming cell junctions. May interact with AFDN. Interacts with PLXND1; they dissociate upon SEMA3E binding to PLXND1 allowing SH3BP1 to transduce downstream signal through RAC1 inactivation. Interacts with ABL1, GRB2 and SRC (via SH3 domain).

Its subcellular location is the cell projection. The protein localises to the cell junction. It is found in the tight junction. The protein resides in the adherens junction. It localises to the phagocytic cup. Its subcellular location is the nucleus. The protein localises to the cytoplasm. It is found in the cytosol. In terms of biological role, GTPase activating protein/GAP which specifically converts GTP-bound Rho-type GTPases including RAC1 and CDC42 in their inactive GDP-bound form. By specifically inactivating RAC1 at the leading edge of migrating cells, it regulates the spatiotemporal organization of cell protrusions which is important for proper cell migration. Also negatively regulates CDC42 in the process of actin remodeling and the formation of epithelial cell junctions. Through its GAP activity toward RAC1 and/or CDC42 plays a specific role in phagocytosis of large particles. Specifically recruited by a PI3 kinase/PI3K-dependent mechanism to sites of large particles engagement, inactivates RAC1 and/or CDC42 allowing the reorganization of the underlying actin cytoskeleton required for engulfment. It also plays a role in angiogenesis and the process of repulsive guidance as part of a semaphorin-plexin signaling pathway. Following the binding of PLXND1 to extracellular SEMA3E it dissociates from PLXND1 and inactivates RAC1, inducing the intracellular reorganization of the actin cytoskeleton and the collapse of cells. This chain is SH3 domain-binding protein 1, found in Rattus norvegicus (Rat).